The sequence spans 67 residues: uncharacterized protein (67 aa).

Belongs to the flocculin family.

This is an uncharacterized protein from Saccharomyces cerevisiae (strain ATCC 204508 / S288c) (Baker's yeast).